The primary structure comprises 377 residues: Molybdenum import ATP-binding protein ModC (377 aa).

The ABC transporter domain occupies 17–254 (ITGDEAIRAR…LDLPFAHDED (238 aa)). 52–59 (GHSGSGKT) is an ATP binding site. Residues 313–377 (DSSILNVLPA…AQVKGVALLR (65 aa)) enclose the Mop domain.

It belongs to the ABC transporter superfamily. Molybdate importer (TC 3.A.1.8) family. In terms of assembly, the complex is composed of two ATP-binding proteins (ModC), two transmembrane proteins (ModB) and a solute-binding protein (ModA).

It localises to the cell inner membrane. The catalysed reaction is molybdate(out) + ATP + H2O = molybdate(in) + ADP + phosphate + H(+). Its function is as follows. Part of the ABC transporter complex ModABC involved in molybdenum import. Responsible for energy coupling to the transport system. The sequence is that of Molybdenum import ATP-binding protein ModC from Aromatoleum aromaticum (strain DSM 19018 / LMG 30748 / EbN1) (Azoarcus sp. (strain EbN1)).